The sequence spans 520 residues: Probable alginate O-acetylase AlgI (520 aa).

10 helical membrane-spanning segments follow: residues 7–24, 39–61, 78–100, 115–137, 150–172, 239–261, 311–333, 353–375, 402–424, and 483–505; these read VFLFLFLPVFLGLYYLSG, FYAWWRVDFLLLFAGVTVFNYWI, WLILGVVVDLCVLGYFKYANFGV, FVLTHILLPIGISFYTFESISYI, NLIDFAAFVAIFPHLIAGPVLRF, LYFDFSGYSDMAIGLGLMMGFRF, LFLTMLLGGLWHGANFTYIIWGA, VLNPLKWVITFLLVVIGWVIFRA, ANLTGLQVGTLVLAYLVLAFFGL, and WLSQLPVLATRLALLLLFAASVL. H322 is a catalytic residue.

The protein belongs to the membrane-bound acyltransferase family.

Its subcellular location is the cell inner membrane. It functions in the pathway glycan biosynthesis; alginate biosynthesis. Functionally, together with AlgJ and AlgF, forms an inner membrane complex which probably interacts with the alginate polymerization-transport complex and adds acetyl groups at the O-2 and O-3 positions of mannuronate residues. Acetylation of alginate is important for the architecture of biofilms and increases resistance to opsonic killing in the host. In Pseudomonas aeruginosa (strain ATCC 15692 / DSM 22644 / CIP 104116 / JCM 14847 / LMG 12228 / 1C / PRS 101 / PAO1), this protein is Probable alginate O-acetylase AlgI (algI).